The sequence spans 414 residues: Apolipoprotein N-acyltransferase (414 aa).

Transmembrane regions (helical) follow at residues 19–39 (GIAL…HFGI), 40–60 (TSPL…LKLP), 63–83 (SGFA…ALSF), 91–111 (LIPF…SMAL), 121–141 (LLLW…VPEV), and 153–173 (LSFG…QRWL). Residues 202-414 (IETHIPQEIR…NRSPSGIIAP (213 aa)) form the CN hydrolase domain. Glutamate 243 acts as the Proton acceptor in catalysis. Residue lysine 298 is part of the active site. The Nucleophile role is filled by cysteine 351.

It belongs to the CN hydrolase family. Apolipoprotein N-acyltransferase subfamily.

The protein resides in the cell inner membrane. The catalysed reaction is N-terminal S-1,2-diacyl-sn-glyceryl-L-cysteinyl-[lipoprotein] + a glycerophospholipid = N-acyl-S-1,2-diacyl-sn-glyceryl-L-cysteinyl-[lipoprotein] + a 2-acyl-sn-glycero-3-phospholipid + H(+). Its pathway is protein modification; lipoprotein biosynthesis (N-acyl transfer). Catalyzes the phospholipid dependent N-acylation of the N-terminal cysteine of apolipoprotein, the last step in lipoprotein maturation. The protein is Apolipoprotein N-acyltransferase of Wolinella succinogenes (strain ATCC 29543 / DSM 1740 / CCUG 13145 / JCM 31913 / LMG 7466 / NCTC 11488 / FDC 602W) (Vibrio succinogenes).